The primary structure comprises 349 residues: NADH-quinone oxidoreductase subunit H (349 aa).

8 helical membrane-spanning segments follow: residues 20–42 (WTLI…LTYF), 88–108 (GIFI…WAVV), 123–143 (LLYI…SGWA), 167–187 (MGFS…VEIV), 202–222 (FLSW…ISGV), 249–269 (GMAF…VSAL), 284–304 (FLPD…FLFL), and 325–345 (VFVP…MSPL).

The protein belongs to the complex I subunit 1 family. NDH-1 is composed of 14 different subunits. Subunits NuoA, H, J, K, L, M, N constitute the membrane sector of the complex.

It is found in the cell inner membrane. The enzyme catalyses a quinone + NADH + 5 H(+)(in) = a quinol + NAD(+) + 4 H(+)(out). Its function is as follows. NDH-1 shuttles electrons from NADH, via FMN and iron-sulfur (Fe-S) centers, to quinones in the respiratory chain. The immediate electron acceptor for the enzyme in this species is believed to be ubiquinone. Couples the redox reaction to proton translocation (for every two electrons transferred, four hydrogen ions are translocated across the cytoplasmic membrane), and thus conserves the redox energy in a proton gradient. This subunit may bind ubiquinone. The chain is NADH-quinone oxidoreductase subunit H from Dechloromonas aromatica (strain RCB).